The sequence spans 470 residues: GTPase Der (470 aa).

2 EngA-type G domains span residues 32–195 and 206–379; these read PVVA…PTIS and RRVA…KSWD. GTP-binding positions include 38–45, 85–89, 147–150, 212–219, 259–263, and 324–327; these read GRPNVGKS, DTGGW, NKVD, GKPNVGKS, DTAGL, and NKWD. Residues 380 to 462 form the KH-like domain; sequence TRVSTGRLNT…PIRINVRVRE (83 aa).

This sequence belongs to the TRAFAC class TrmE-Era-EngA-EngB-Septin-like GTPase superfamily. EngA (Der) GTPase family. As to quaternary structure, associates with the 50S ribosomal subunit.

Its function is as follows. GTPase that plays an essential role in the late steps of ribosome biogenesis. The chain is GTPase Der from Mycolicibacterium vanbaalenii (strain DSM 7251 / JCM 13017 / BCRC 16820 / KCTC 9966 / NRRL B-24157 / PYR-1) (Mycobacterium vanbaalenii).